The primary structure comprises 90 residues: High mobility group nucleosome-binding domain-containing protein 4 (90 aa).

Residues 1 to 90 (MPKRKAKGDA…QKAEGTGDAK (90 aa)) form a disordered region. Over residues 7-23 (KGDAKGDKGKVKDEPQR) the composition is skewed to basic and acidic residues. The residue at position 29 (S29) is an ADP-ribosylserine. Over residues 37–64 (PEPRPKKAPAKKGEKLAKGRKGKAEVSK) the composition is skewed to basic and acidic residues. A compositionally biased stretch (polar residues) spans 65 to 83 (DGNNPAKNRDASTVQSQKA). S80 is modified (phosphoserine). An N6-acetyllysine modification is found at K82.

This sequence belongs to the HMGN family.

The protein resides in the nucleus. The sequence is that of High mobility group nucleosome-binding domain-containing protein 4 (HMGN4) from Bos taurus (Bovine).